Consider the following 277-residue polypeptide: Probable endonuclease 4 (277 aa).

The Zn(2+) site is built by H67, H107, E141, D173, H176, H210, D223, H225, and E255.

It belongs to the AP endonuclease 2 family. Requires Zn(2+) as cofactor.

It carries out the reaction Endonucleolytic cleavage to 5'-phosphooligonucleotide end-products.. In terms of biological role, endonuclease IV plays a role in DNA repair. It cleaves phosphodiester bonds at apurinic or apyrimidinic (AP) sites, generating a 3'-hydroxyl group and a 5'-terminal sugar phosphate. The chain is Probable endonuclease 4 from Haloarcula marismortui (strain ATCC 43049 / DSM 3752 / JCM 8966 / VKM B-1809) (Halobacterium marismortui).